The following is a 188-amino-acid chain: NAD(P)H-quinone oxidoreductase subunit J (188 aa).

Residues 1 to 12 (MSETPSKQTAAS) are compositionally biased toward polar residues. Residues 1–23 (MSETPSKQTAASDETGAVVAPEP) form a disordered region.

This sequence belongs to the complex I 30 kDa subunit family. As to quaternary structure, NDH-1 can be composed of about 15 different subunits; different subcomplexes with different compositions have been identified which probably have different functions.

The protein resides in the cellular thylakoid membrane. The enzyme catalyses a plastoquinone + NADH + (n+1) H(+)(in) = a plastoquinol + NAD(+) + n H(+)(out). It carries out the reaction a plastoquinone + NADPH + (n+1) H(+)(in) = a plastoquinol + NADP(+) + n H(+)(out). NDH-1 shuttles electrons from an unknown electron donor, via FMN and iron-sulfur (Fe-S) centers, to quinones in the respiratory and/or the photosynthetic chain. The immediate electron acceptor for the enzyme in this species is believed to be plastoquinone. Couples the redox reaction to proton translocation, and thus conserves the redox energy in a proton gradient. Cyanobacterial NDH-1 also plays a role in inorganic carbon-concentration. This is NAD(P)H-quinone oxidoreductase subunit J from Synechococcus sp. (strain CC9605).